Reading from the N-terminus, the 207-residue chain is Ribosomal RNA large subunit methyltransferase E (207 aa).

Positions 60, 62, 80, 96, and 121 each coordinate S-adenosyl-L-methionine. Lys161 acts as the Proton acceptor in catalysis.

This sequence belongs to the class I-like SAM-binding methyltransferase superfamily. RNA methyltransferase RlmE family.

It localises to the cytoplasm. It catalyses the reaction uridine(2552) in 23S rRNA + S-adenosyl-L-methionine = 2'-O-methyluridine(2552) in 23S rRNA + S-adenosyl-L-homocysteine + H(+). Specifically methylates the uridine in position 2552 of 23S rRNA at the 2'-O position of the ribose in the fully assembled 50S ribosomal subunit. This Azotobacter vinelandii (strain DJ / ATCC BAA-1303) protein is Ribosomal RNA large subunit methyltransferase E.